The sequence spans 332 residues: DGAT1/2-independent enzyme synthesizing storage lipids (332 aa).

The Lumenal segment spans residues 1–10 (MIGSNESSTE). A glycan (N-linked (GlcNAc...) asparagine) is linked at Asn5. A helical transmembrane segment spans residues 11-31 (GPIPTSYLSFLAYLLGEWTGV). Over 32-45 (EHTEDYLSYGAYLS) the chain is Cytoplasmic. The chain crosses the membrane as a helical span at residues 46-66 (WVLFPLAIVFILPVAIFFFCF). The Lumenal portion of the chain corresponds to 67-332 (NTSLLLLHIY…ERFQTRQKED (266 aa)). The active site involves His132. The N-linked (GlcNAc...) asparagine glycan is linked to Asn289.

Belongs to the diacylglycerol acyltransferase family. Highly divergent.

Its subcellular location is the endoplasmic reticulum membrane. It catalyses the reaction a 1,2-diacylglycerol + a 1,2-diacyl-sn-glycero-3-phosphocholine = a triacylglycerol + a 1-acyl-sn-glycero-3-phosphocholine. It carries out the reaction a 1-O-alkyl-2-acyl-sn-glycero-3-phosphocholine + a 1,2-diacylglycerol = a 1-O-alkyl-sn-glycero-3-phosphocholine + a triacylglycerol. The enzyme catalyses a 2-acylglycerol + an acyl-CoA = a 1,2-diacylglycerol + CoA. The catalysed reaction is an acyl-CoA + a 1,2-diacyl-sn-glycerol = a triacyl-sn-glycerol + CoA. It catalyses the reaction 2-(9Z-octadecenoyl)-glycerol + (9Z)-octadecenoyl-CoA = 1,2-di-(9Z-octadecenoyl)-glycerol + CoA. It carries out the reaction 1,2-di-(9Z-octadecenoyl)-sn-glycerol + (9Z)-octadecenoyl-CoA = 1,2,3-tri-(9Z-octadecenoyl)-glycerol + CoA. Its function is as follows. Catalytic subunit of the alternative triglyceride biosynthesis pathway, which mediates formation of triacylglycerol from diacylglycerol and membrane phospholipids. Synthesizes triacylglycerol at the expense of membrane phospholipids, such as phosphatidylcholine (PC) and its ether-linked form (ePC), thereby altering the composition of membranes. The alternative triglyceride biosynthesis pathway is probably required to provide the energy required for rapid growth when fuel sources are limiting. It maintains mitochondrial function during periods of extracellular lipid starvation. Can also use acyl-CoA as donor: acts as a acyl-CoA:monoacylglycerol acyltransferase (MGAT), but also shows acyl-CoA:diacylglycerol acyltransferase (DGAT) activity. This chain is DGAT1/2-independent enzyme synthesizing storage lipids (TMEM68), found in Gallus gallus (Chicken).